The primary structure comprises 318 residues: tRNA uridine(34) hydroxylase (318 aa).

Residues 123–217 (EDDDTVIIDA…YGKDPETKSE (95 aa)) enclose the Rhodanese domain. Cys177 acts as the Cysteine persulfide intermediate in catalysis.

This sequence belongs to the TrhO family.

It catalyses the reaction uridine(34) in tRNA + AH2 + O2 = 5-hydroxyuridine(34) in tRNA + A + H2O. Its function is as follows. Catalyzes oxygen-dependent 5-hydroxyuridine (ho5U) modification at position 34 in tRNAs. This is tRNA uridine(34) hydroxylase from Staphylococcus aureus (strain COL).